The following is a 243-amino-acid chain: Zwei Ig domain protein zig-6 (243 aa).

Positions 1–20 (MTKLCLLLLPLVFLVSYSFA) are cleaved as a signal peptide. Ig-like C2-type domains lie at 30 to 118 (PNAN…MDVI) and 133 to 212 (GQVL…KTVT). A disulfide bridge links Cys47 with Cys102. N-linked (GlcNAc...) asparagine glycosylation is found at Asn91 and Asn142. Cysteines 145 and 196 form a disulfide.

Expressed in head and tail body wall muscles.

The protein resides in the secreted. Functionally, probably not involved in maintaining the position of ASI and ASH head neuron cell bodies and ventral nerve cord axons of PVQ, PVP, RMEV, AVK and HSN neurons. The chain is Zwei Ig domain protein zig-6 from Caenorhabditis elegans.